The chain runs to 246 residues: Isoprenyl transferase (246 aa).

Residue Asp18 is part of the active site. Asp18 provides a ligand contact to Mg(2+). Residues 19 to 22 (GNGR), Trp23, Arg31, His35, and 63 to 65 (SAE) contribute to the substrate site. The active-site Proton acceptor is Asn66. Substrate is bound by residues Trp67, Arg69, Arg186, and 192–194 (RIS). Glu205 contacts Mg(2+).

The protein belongs to the UPP synthase family. In terms of assembly, homodimer. Mg(2+) is required as a cofactor.

Its function is as follows. Catalyzes the condensation of isopentenyl diphosphate (IPP) with allylic pyrophosphates generating different type of terpenoids. This Geobacter sulfurreducens (strain ATCC 51573 / DSM 12127 / PCA) protein is Isoprenyl transferase.